The chain runs to 597 residues: Arginine--tRNA ligase (597 aa).

A 'HIGH' region motif is present at residues 125 to 135 (PNTNKPLHLGH).

It belongs to the class-I aminoacyl-tRNA synthetase family. Monomer.

Its subcellular location is the cytoplasm. The enzyme catalyses tRNA(Arg) + L-arginine + ATP = L-arginyl-tRNA(Arg) + AMP + diphosphate. This Bacteroides fragilis (strain YCH46) protein is Arginine--tRNA ligase.